The sequence spans 363 residues: MRLYPAFFKAAFSWMDPELAHTLGFAGIKLAHRTGLGRVLSRVTAPDEGAEVNVMGLTFPSPFGLAAGFDKGATGTHALTQLGFGHVEIGTVTGQAQPGNPRPRLFRLVRDRAVINRMGFNNDGAEAVAPRVAAALQTLAQESIRTGRRRPVVGVNIGKTKAVGLEDAAADYVRSTRVLAPYADYLVVNVSSPNTPGLRQLQELDALRPLLLAVRAEADRVTGRRVPLLVKIAPDLADEDVTAVADLALELGLDGIVATNTTIAREGLGLRTNHDDVAACGAGGLSGAPLRRRSLEVLRLLKEHAGEQLVLVSVGGVTTARDVMERLDAGASLVQGYTAFLYEGPFWAGRINRGLRRAAREGR.

Residues Ala-67 to Lys-71 and Thr-91 contribute to the FMN site. Substrate is bound at residue Lys-71. Asn-116 to Phe-120 contributes to the substrate binding site. Residues Asn-156 and Asn-189 each coordinate FMN. Substrate is bound at residue Asn-189. Residue Ser-192 is the Nucleophile of the active site. Asn-194 lines the substrate pocket. FMN-binding residues include Lys-231 and Thr-259. Asn-260–Thr-261 contributes to the substrate binding site. FMN contacts are provided by residues Gly-287, Gly-316, and Tyr-337–Thr-338.

This sequence belongs to the dihydroorotate dehydrogenase family. Type 2 subfamily. Monomer. Requires FMN as cofactor.

The protein localises to the cell membrane. The catalysed reaction is (S)-dihydroorotate + a quinone = orotate + a quinol. It participates in pyrimidine metabolism; UMP biosynthesis via de novo pathway; orotate from (S)-dihydroorotate (quinone route): step 1/1. In terms of biological role, catalyzes the conversion of dihydroorotate to orotate with quinone as electron acceptor. The protein is Dihydroorotate dehydrogenase (quinone) of Kocuria rhizophila (strain ATCC 9341 / DSM 348 / NBRC 103217 / DC2201).